The primary structure comprises 733 residues: Polyribonucleotide nucleotidyltransferase (733 aa).

Residues D489 and D495 each coordinate Mg(2+). One can recognise a KH domain in the interval 556–615 (PKIDTIKIDVDKIKIVIGKGGETIDKIIAETGVKIDIDEEGNVSIYSSDQDAINRAKEII). An S1 motif domain is found at 625 to 693 (DEVYHAKVVR…AKGRVDASMK (69 aa)). Residues 691–733 (SMKVLLPRPPKSDKPKHHHDKGHHPHKEYKGHKDHQESPKTEE) are disordered. Residues 704–723 (KPKHHHDKGHHPHKEYKGHK) are compositionally biased toward basic residues. Basic and acidic residues predominate over residues 724-733 (DHQESPKTEE).

Belongs to the polyribonucleotide nucleotidyltransferase family. Mg(2+) serves as cofactor.

Its subcellular location is the cytoplasm. The catalysed reaction is RNA(n+1) + phosphate = RNA(n) + a ribonucleoside 5'-diphosphate. Functionally, involved in mRNA degradation. Catalyzes the phosphorolysis of single-stranded polyribonucleotides processively in the 3'- to 5'-direction. This Streptococcus sanguinis (strain SK36) protein is Polyribonucleotide nucleotidyltransferase.